The sequence spans 365 residues: Flagellar P-ring protein (365 aa).

Residues 1 to 21 (MIKRIISIVFLLLTLPQLALA) form the signal peptide.

It belongs to the FlgI family. In terms of assembly, the basal body constitutes a major portion of the flagellar organelle and consists of four rings (L,P,S, and M) mounted on a central rod.

It localises to the periplasm. The protein localises to the bacterial flagellum basal body. Functionally, assembles around the rod to form the L-ring and probably protects the motor/basal body from shearing forces during rotation. This Geobacter metallireducens (strain ATCC 53774 / DSM 7210 / GS-15) protein is Flagellar P-ring protein.